A 341-amino-acid chain; its full sequence is GTP 3',8-cyclase (341 aa).

The Radical SAM core domain maps to 11-231 (KRNRPLRDLR…DLINKHMPVE (221 aa)). Arginine 20 contacts GTP. Residues cysteine 27 and cysteine 31 each coordinate [4Fe-4S] cluster. Residue tyrosine 33 coordinates S-adenosyl-L-methionine. Cysteine 34 contacts [4Fe-4S] cluster. Arginine 75 serves as a coordination point for GTP. Glycine 79 provides a ligand contact to S-adenosyl-L-methionine. Threonine 106 provides a ligand contact to GTP. Serine 130 contributes to the S-adenosyl-L-methionine binding site. Lysine 167 provides a ligand contact to GTP. Methionine 201 contributes to the S-adenosyl-L-methionine binding site. Residues cysteine 265 and cysteine 268 each coordinate [4Fe-4S] cluster. Residue 270–272 (RAR) coordinates GTP. Cysteine 282 contacts [4Fe-4S] cluster.

It belongs to the radical SAM superfamily. MoaA family. Monomer and homodimer. The cofactor is [4Fe-4S] cluster.

It carries out the reaction GTP + AH2 + S-adenosyl-L-methionine = (8S)-3',8-cyclo-7,8-dihydroguanosine 5'-triphosphate + 5'-deoxyadenosine + L-methionine + A + H(+). Its pathway is cofactor biosynthesis; molybdopterin biosynthesis. In terms of biological role, catalyzes the cyclization of GTP to (8S)-3',8-cyclo-7,8-dihydroguanosine 5'-triphosphate. Required for both nitrate assimilation and respiration. In Bacillus subtilis (strain 168), this protein is GTP 3',8-cyclase.